A 210-amino-acid polypeptide reads, in one-letter code: Orotate phosphoribosyltransferase (210 aa).

5-phospho-alpha-D-ribose 1-diphosphate-binding positions include arginine 96, lysine 100, histidine 102, and 122-130 (EDLISTGGS). Serine 126 is an orotate binding site.

It belongs to the purine/pyrimidine phosphoribosyltransferase family. PyrE subfamily. As to quaternary structure, homodimer. It depends on Mg(2+) as a cofactor.

It carries out the reaction orotidine 5'-phosphate + diphosphate = orotate + 5-phospho-alpha-D-ribose 1-diphosphate. It functions in the pathway pyrimidine metabolism; UMP biosynthesis via de novo pathway; UMP from orotate: step 1/2. In terms of biological role, catalyzes the transfer of a ribosyl phosphate group from 5-phosphoribose 1-diphosphate to orotate, leading to the formation of orotidine monophosphate (OMP). This is Orotate phosphoribosyltransferase (pyrE) from Streptococcus pneumoniae serotype 19F (strain G54).